The following is a 91-amino-acid chain: UPF0213 protein NMC1807 (91 aa).

The GIY-YIG domain maps to 4-83; the sequence is SNWSVYLILC…AAQKRQLWEQ (80 aa).

The protein belongs to the UPF0213 family.

The polypeptide is UPF0213 protein NMC1807 (Neisseria meningitidis serogroup C / serotype 2a (strain ATCC 700532 / DSM 15464 / FAM18)).